The primary structure comprises 192 residues: Sarcoplasmic calcium-binding protein, alpha-B and -A chains (192 aa).

Residue alanine 1 is modified to N-acetylalanine. EF-hand domains lie at tryptophan 4 to isoleucine 39, isoleucine 56 to glycine 91, alanine 100 to phenylalanine 135, and alanine 136 to phenylalanine 171. Positions 17, 19, 21, 28, 69, 71, 73, 75, 80, 113, 115, 117, 119, and 124 each coordinate Ca(2+).

As to quaternary structure, SCPs from crayfish, lobster, and shrimp are polymorphic dimers; three isotypes (alpha-alpha, alpha-beta, and beta-beta) have been identified.

Its function is as follows. Like parvalbumins, SCPs seem to be more abundant in fast contracting muscles, but no functional relationship can be established from this distribution. The chain is Sarcoplasmic calcium-binding protein, alpha-B and -A chains from Penaeus sp. (Penoeid shrimp).